A 198-amino-acid chain; its full sequence is Holliday junction branch migration complex subunit RuvA (198 aa).

The interval 1–63 is domain I; that stretch reads MIALLTGQIA…EDAIQLYGFR (63 aa). The interval 64–142 is domain II; it reads TSLEKSFFQL…KLDLSSVVVP (79 aa). Positions 143-153 are flexible linker; the sequence is EPRQMPEDDLL. The tract at residues 153–198 is domain III; the sequence is LEDVVSALLNLGYKEPQVRKVLAGLNPGSDASLEGVLKQALKSLMR.

It belongs to the RuvA family. In terms of assembly, homotetramer. Forms an RuvA(8)-RuvB(12)-Holliday junction (HJ) complex. HJ DNA is sandwiched between 2 RuvA tetramers; dsDNA enters through RuvA and exits via RuvB. An RuvB hexamer assembles on each DNA strand where it exits the tetramer. Each RuvB hexamer is contacted by two RuvA subunits (via domain III) on 2 adjacent RuvB subunits; this complex drives branch migration. In the full resolvosome a probable DNA-RuvA(4)-RuvB(12)-RuvC(2) complex forms which resolves the HJ.

Its subcellular location is the cytoplasm. The RuvA-RuvB-RuvC complex processes Holliday junction (HJ) DNA during genetic recombination and DNA repair, while the RuvA-RuvB complex plays an important role in the rescue of blocked DNA replication forks via replication fork reversal (RFR). RuvA specifically binds to HJ cruciform DNA, conferring on it an open structure. The RuvB hexamer acts as an ATP-dependent pump, pulling dsDNA into and through the RuvAB complex. HJ branch migration allows RuvC to scan DNA until it finds its consensus sequence, where it cleaves and resolves the cruciform DNA. The protein is Holliday junction branch migration complex subunit RuvA of Pelobacter propionicus (strain DSM 2379 / NBRC 103807 / OttBd1).